We begin with the raw amino-acid sequence, 926 residues long: Tyrosine-protein phosphatase non-receptor type 4 (926 aa).

Residues Val29–Arg312 form the FERM domain. Disordered regions lie at residues Asp380–Arg412 and Glu430–Trp475. Composition is skewed to polar residues over residues Asn398–Gly408 and Glu430–Thr456. Ser474 carries the post-translational modification Phosphoserine. In terms of domain architecture, PDZ spans Leu517–Ser589. The Tyrosine-protein phosphatase domain occupies Val655–Val911. Residues Asp820, Cys852 to Arg858, and Gln896 contribute to the substrate site. Cys852 acts as the Phosphocysteine intermediate in catalysis.

Belongs to the protein-tyrosine phosphatase family. Non-receptor class subfamily. Interacts with MAPK12 (via C-terminus); this interaction abolishes PTPN4 catalytic autoinhibition and thus activates the phosphatase activity. As to quaternary structure, (Microbial infection) Interacts with attenuated rabies virus protein G; this interaction is required for virally-induced apoptosis. In terms of processing, highly phosphorylated on serine and threonine residues but not on tyrosines. Cleaved and activated by calpain I/CAPN1.

The protein localises to the cell membrane. It is found in the cytoplasm. Its subcellular location is the cytoskeleton. The enzyme catalyses O-phospho-L-tyrosyl-[protein] + H2O = L-tyrosyl-[protein] + phosphate. In terms of biological role, phosphatase that plays a role in immunity, learning, synaptic plasticity or cell homeostasis. Regulates neuronal cell homeostasis by protecting neurons against apoptosis. Negatively regulates TLR4-induced interferon beta production by dephosphorylating adapter TICAM2 and inhibiting subsequent TRAM-TRIF interaction. Also dephosphorylates the immunoreceptor tyrosine-based activation motifs/ITAMs of the TCR zeta subunit and thereby negatively regulates TCR-mediated signaling pathway. May act at junctions between the membrane and the cytoskeleton. The protein is Tyrosine-protein phosphatase non-receptor type 4 (PTPN4) of Homo sapiens (Human).